We begin with the raw amino-acid sequence, 318 residues long: NADH-ubiquinone oxidoreductase chain 1 (318 aa).

8 helical membrane-spanning segments follow: residues 2 to 22, 69 to 89, 100 to 120, 146 to 166, 171 to 191, 222 to 242, 253 to 273, and 294 to 314; these read PVIN…FLML, ILYI…WTPL, LGLL…LWSG, LALI…STLI, HSWL…STLA, LFFM…AMIF, ELHT…FLWI, and LPLT…TSGI.

It belongs to the complex I subunit 1 family. In terms of assembly, core subunit of respiratory chain NADH dehydrogenase (Complex I) which is composed of 45 different subunits.

Its subcellular location is the mitochondrion inner membrane. It catalyses the reaction a ubiquinone + NADH + 5 H(+)(in) = a ubiquinol + NAD(+) + 4 H(+)(out). Its function is as follows. Core subunit of the mitochondrial membrane respiratory chain NADH dehydrogenase (Complex I) which catalyzes electron transfer from NADH through the respiratory chain, using ubiquinone as an electron acceptor. Essential for the catalytic activity and assembly of complex I. The protein is NADH-ubiquinone oxidoreductase chain 1 (MT-ND1) of Pongo pygmaeus (Bornean orangutan).